Reading from the N-terminus, the 186-residue chain is Ribosome-recycling factor (186 aa).

It belongs to the RRF family.

Its subcellular location is the cytoplasm. In terms of biological role, responsible for the release of ribosomes from messenger RNA at the termination of protein biosynthesis. May increase the efficiency of translation by recycling ribosomes from one round of translation to another. The polypeptide is Ribosome-recycling factor (Rickettsia bellii (strain OSU 85-389)).